The sequence spans 270 residues: Protein US2 homolog (270 aa).

The protein belongs to the herpesviridae US2 family.

In Gallid herpesvirus 2 (strain Chicken/Md5/ATCC VR-987) (GaHV-2), this protein is Protein US2 homolog (MDV091).